A 1471-amino-acid chain; its full sequence is Myosin-51 (1471 aa).

In terms of domain architecture, Myosin N-terminal SH3-like spans 7–61; the sequence is SVGSECWVSNNNGHWDAARLIEIKDNGGGKVVATVAKSSGVLETVNYQQLQNRNI. In terms of domain architecture, Myosin motor spans 65–749; it reads ESPSDLTNLP…VIGNFEEAHR (685 aa). 159 to 166 is an ATP binding site; that stretch reads GESGAGKT. Residues 628-650 form an actin-binding region; it reads LSQLMTTVSSTNVHYIRCIKPNE. 6 consecutive IQ domains span residues 753–773, 776–796, 801–821, 824–844, 849–869, and 872–892; these read SKST…KEYQ, VKFI…QRFE, ERAA…KRYL, IKCA…SRYI, ESSA…KTFR, and KKSV…RYLR. Residues 909 to 952 are a coiled coil; the sequence is KNLQASITEVSKQLKSNSKKVTVLRNKLNILNNSLSKWKCLIKK. Residues 1171-1417 enclose the Dilute domain; it reads EKPLQAVLYW…SKAVEALSCK (247 aa).

Belongs to the TRAFAC class myosin-kinesin ATPase superfamily. Myosin family.

It localises to the cytoplasm. Its function is as follows. Involved in cytokinesis. In Schizosaccharomyces pombe (strain 972 / ATCC 24843) (Fission yeast), this protein is Myosin-51 (myo51).